The following is a 129-amino-acid chain: Large ribosomal subunit protein bL19c (129 aa).

It belongs to the bacterial ribosomal protein bL19 family.

Its subcellular location is the plastid. This is Large ribosomal subunit protein bL19c from Prototheca wickerhamii.